The primary structure comprises 293 residues: Glutamyl-Q tRNA(Asp) synthetase (293 aa).

L-glutamate is bound by residues 26 to 30 (RYAPS) and aspartate 62. The 'HIGH' region signature appears at 29-39 (PSPTGALHLGN). Zn(2+)-binding residues include cysteine 118, cysteine 120, tyrosine 131, and cysteine 135. 2 residues coordinate L-glutamate: tyrosine 178 and arginine 196. Residues 234 to 238 (KLSKR) carry the 'KMSKS' region motif. ATP is bound at residue lysine 237.

This sequence belongs to the class-I aminoacyl-tRNA synthetase family. GluQ subfamily. Requires Zn(2+) as cofactor.

In terms of biological role, catalyzes the tRNA-independent activation of glutamate in presence of ATP and the subsequent transfer of glutamate onto a tRNA(Asp). Glutamate is transferred on the 2-amino-5-(4,5-dihydroxy-2-cyclopenten-1-yl) moiety of the queuosine in the wobble position of the QUC anticodon. This chain is Glutamyl-Q tRNA(Asp) synthetase, found in Parasynechococcus marenigrum (strain WH8102).